We begin with the raw amino-acid sequence, 85 residues long: U4-theraphotoxin-Hhn1e (85 aa).

The signal sequence occupies residues 1–22; that stretch reads MKVTLIAILTCAAVLVLHTTAA. Positions 23–48 are excised as a propeptide; it reads EELEAESQLMEVGMPDTELAAVDEER. 3 disulfides stabilise this stretch: cysteine 52–cysteine 66, cysteine 56–cysteine 77, and cysteine 71–cysteine 82.

This sequence belongs to the neurotoxin 12 (Hwtx-2) family. 02 (Hwtx-2) subfamily. As to expression, expressed by the venom gland.

The protein resides in the secreted. In terms of biological role, postsynaptic neurotoxin. In Cyriopagopus hainanus (Chinese bird spider), this protein is U4-theraphotoxin-Hhn1e.